A 359-amino-acid chain; its full sequence is Guanine nucleotide-binding protein subunit alpha-11 (359 aa).

2 S-palmitoyl cysteine lipidation sites follow: cysteine 9 and cysteine 10. Positions 38–359 (RELKLLLLGT…QLNLKEYNLV (322 aa)) constitute a G-alpha domain. The G1 motif stretch occupies residues 41–54 (KLLLLGTGESGKST). Residues 46–53 (GTGESGKS) and 180–183 (LRVR) each bind GTP. Serine 53 lines the Mg(2+) pocket. The interval 178-186 (DVLRVRVPT) is G2 motif. Threonine 186 lines the Mg(2+) pocket. The segment at 201–210 (FRMVDVGGQR) is G3 motif. The G4 motif stretch occupies residues 270–277 (ILFLNKKD). GTP is bound by residues 274–277 (NKKD) and alanine 331. Residues 329-334 (TCATDT) are G5 motif.

This sequence belongs to the G-alpha family. G(q) subfamily. In terms of assembly, g proteins are composed of 3 units; alpha, beta and gamma. The alpha chain contains the guanine nucleotide binding site. Interacts with RGS22. Interacts with NTSR1.

Its subcellular location is the cell membrane. The protein resides in the cytoplasm. The catalysed reaction is GTP + H2O = GDP + phosphate + H(+). Guanine nucleotide-binding proteins (G proteins) function as transducers downstream of G protein-coupled receptors (GPCRs) in numerous signaling cascades. The alpha chain contains the guanine nucleotide binding site and alternates between an active, GTP-bound state and an inactive, GDP-bound state. Signaling by an activated GPCR promotes GDP release and GTP binding. The alpha subunit has a low GTPase activity that converts bound GTP to GDP, thereby terminating the signal. Both GDP release and GTP hydrolysis are modulated by numerous regulatory proteins. Signaling is mediated via phospholipase C-beta-dependent inositol lipid hydrolysis for signal propagation: activates phospholipase C-beta: following GPCR activation, GNA11 activates PLC-beta (PLCB1, PLCB2, PLCB3 or PLCB4), leading to production of diacylglycerol (DAG) and inositol 1,4,5-trisphosphate (IP3). Transduces FFAR4 signaling in response to long-chain fatty acids (LCFAs). Together with GNAQ, required for heart development. In the respiratory epithelium, transmits OXGR1-dependent signals that lead to downstream intracellular Ca(2+) release and mucocilliary clearance of airborne pathogens. The protein is Guanine nucleotide-binding protein subunit alpha-11 (GNA11) of Sus scrofa (Pig).